The primary structure comprises 951 residues: MEPRAATTGELVRAASPSFQARLWKNLQLGVGKGKGGGGGRAGGPEHRTAATPTPSPPPPGTTQDALAGVGSTGSRWSGFKKRKQVLDRVFSSSQPNLCCSSPEPLEPGGAGRAEQGSTLRRRLREHLLPVAKGSSTATGTGGVTPPGGRSPDSAPSSSSASSSLSSSPQPPPRGDRVRDESTRRGGPGVHLCHQKSSSLPGTACLEQLLEPAPPPAEPARGPAEPQALQKDIERDCSQKISTVGNSNADVPLADPGMYQLDITLRRGQSLAARDRGGTSDPYVKFKIGRKEVFRSKIIHKNLNPVWEEKACVLIDHLREPLYIKVFDYDFGLQDDFMGSAFLDLTQLELNRSTDVTLTLKDPHYPDHDLGIILLSVILTPKEGEHRDVTMLMRKSWKRSSKFQTQSLRLSDQHRKSHLWRGIVSITLIEGRDLKAMDSNGLSDPYVKFRLGHQKYKSKIMPKTLNPQWREQFDFHLYEERGGIMDITAWDKDAGKRDDFIGRCQVDLSSLSREQTHKLELHLEEGEGHLVLLVTLTASATVCISDLSVNSMEDQKEREEILKRYSPLRIFNNLKDVGFLQVKVIRAEGLMAADVTGKSDPFCVVELNNDRLLTHTVYKNLNPEWNKVFTFNIKDIHSVLEVTVYDEDRDRSADFLGRVAIPLLSIQNGEQKAYVLKNKQLTGPTKGVIYLEIDVIFNAVKASLRTLIPKERKYIEEENRLSKQLLLRNFIRTKRCVIVLVNAAYYVNSCFDWDSPPRSLAAFVLFLLIVWNFELYMIPLLLLLLLTWNYFLIISGKDNRQRDTVVEDMLEDEEEEDDRDDKDGEKKGFINKIYAIQEVCVSVQNILDEVASLGERIKNTFNWTVPFLSWLAIVALCVFTAILYFIPLRYIVLVWGINKFTKKLRSPYAIDNNELLDFLSRVPSDVQVVQYQELKPDHSHSPYKRKKNNLG.

Disordered regions lie at residues 29–79 (LGVG…RWSG), 92–117 (SSSQ…AEQG), 129–198 (LPVA…QKSS), and 210–231 (LEPA…ALQK). Residues 31-43 (VGKGKGGGGGRAG) show a composition bias toward gly residues. Positions 147–168 (PGGRSPDSAPSSSSASSSLSSS) are enriched in low complexity. Over residues 174–184 (RGDRVRDESTR) the composition is skewed to basic and acidic residues. Low complexity predominate over residues 219 to 228 (PARGPAEPQA). 3 C2 domains span residues 240 to 358 (KIST…DVTL), 404 to 521 (QTQS…KLEL), and 555 to 676 (QKER…AYVL). Residues aspartate 275, aspartate 281, aspartate 328, aspartate 330, aspartate 336, aspartate 438, aspartate 444, aspartate 491, aspartate 493, aspartate 499, aspartate 594, aspartate 600, aspartate 646, aspartate 648, and aspartate 654 each contribute to the Ca(2+) site. Helical transmembrane passes span 763 to 783 (FVLF…LLLL) and 866 to 886 (PFLS…LYFI).

It belongs to the MCTP family. Ca(2+) serves as cofactor.

The protein resides in the cytoplasmic vesicle. The protein localises to the secretory vesicle. Its subcellular location is the synaptic vesicle membrane. It is found in the recycling endosome. It localises to the endoplasmic reticulum membrane. Calcium sensor which is essential for the stabilization of normal baseline neurotransmitter release and for the induction and long-term maintenance of presynaptic homeostatic plasticity. The sequence is that of Multiple C2 and transmembrane domain-containing protein 1 from Mus musculus (Mouse).